Consider the following 265-residue polypeptide: Indole-3-glycerol phosphate synthase (265 aa).

It belongs to the TrpC family.

The enzyme catalyses 1-(2-carboxyphenylamino)-1-deoxy-D-ribulose 5-phosphate + H(+) = (1S,2R)-1-C-(indol-3-yl)glycerol 3-phosphate + CO2 + H2O. It functions in the pathway amino-acid biosynthesis; L-tryptophan biosynthesis; L-tryptophan from chorismate: step 4/5. This chain is Indole-3-glycerol phosphate synthase, found in Syntrophobacter fumaroxidans (strain DSM 10017 / MPOB).